The primary structure comprises 357 residues: DNA replication and repair protein RecF (357 aa).

An ATP-binding site is contributed by 30–37; the sequence is GANGSGKT.

It belongs to the RecF family.

It is found in the cytoplasm. Its function is as follows. The RecF protein is involved in DNA metabolism; it is required for DNA replication and normal SOS inducibility. RecF binds preferentially to single-stranded, linear DNA. It also seems to bind ATP. The polypeptide is DNA replication and repair protein RecF (Escherichia coli O139:H28 (strain E24377A / ETEC)).